We begin with the raw amino-acid sequence, 430 residues long: Acylsugar acyltransferase 3 (430 aa).

Catalysis depends on proton acceptor residues His-155 and Asp-367.

Belongs to the plant acyltransferase family. As to quaternary structure, monomer. As to expression, expressed in tip cells of type I trichomes of stems and petioles, sites of acylsugars production.

Its function is as follows. Catalyzes the transfer of short (four to five carbons) branched acyl chains to the furanose ring of di-acylsucrose acceptors to produce tri-acylsucroses such as S3:15 (5,5,5), S4:17 (2,5,5,5) and S4:24 (2,5,5,12) acylsucroses. This chain is Acylsugar acyltransferase 3, found in Solanum lycopersicum (Tomato).